The chain runs to 213 residues: Ribosomal RNA large subunit methyltransferase E (213 aa).

S-adenosyl-L-methionine-binding residues include Gly60, Trp62, Asp80, Asp96, and Asp121. Lys161 functions as the Proton acceptor in the catalytic mechanism.

Belongs to the class I-like SAM-binding methyltransferase superfamily. RNA methyltransferase RlmE family.

It localises to the cytoplasm. The enzyme catalyses uridine(2552) in 23S rRNA + S-adenosyl-L-methionine = 2'-O-methyluridine(2552) in 23S rRNA + S-adenosyl-L-homocysteine + H(+). Specifically methylates the uridine in position 2552 of 23S rRNA at the 2'-O position of the ribose in the fully assembled 50S ribosomal subunit. In Xylella fastidiosa (strain 9a5c), this protein is Ribosomal RNA large subunit methyltransferase E.